The following is a 211-amino-acid chain: Large ribosomal subunit protein bL25 (211 aa).

Disordered regions lie at residues 1 to 23 (MAGE…AARQ) and 191 to 211 (LRSA…AEEV). A compositionally biased stretch (acidic residues) spans 196-211 (NEADEEETEEATAEEV).

Belongs to the bacterial ribosomal protein bL25 family. CTC subfamily. In terms of assembly, part of the 50S ribosomal subunit; part of the 5S rRNA/L5/L18/L25 subcomplex. Contacts the 5S rRNA. Binds to the 5S rRNA independently of L5 and L18.

This is one of the proteins that binds to the 5S RNA in the ribosome where it forms part of the central protuberance. The polypeptide is Large ribosomal subunit protein bL25 (Dinoroseobacter shibae (strain DSM 16493 / NCIMB 14021 / DFL 12)).